The following is a 295-amino-acid chain: MSGALDVLQMKEEDVLKFLAAGTHLGGTNLDFQMEQYIYKRKSDGIYIINLKRTWEKLLLAARAIVAIENPADVSVISSRNTGQRAVLKFAAATGATPIAGRFTPGTFTNQIQAAFREPRLLVVTDPRADHQPLTEASYVNLPTIALCNTDSPLRYVDIAIPCNNKGAHSVGLMWWMLAREVLRMRGTISREHPWEVMPDLYFYRDPEEIEKEEQAAAEKAVTKEEFQGEWTAPAPEFTAAQPEVADWSEGVQVPSVPIQQFPTEDWSAQPSTEDWSAAPTAQATEWVGTTTEWS.

An N-acetylserine modification is found at S2. Residue S43 is modified to Phosphoserine. N6-acetyllysine is present on K52. The interval T54–Q113 is interaction with PPP1R16B. N6-acetyllysine; alternate is present on K89. Residue K89 forms a Glycyl lysine isopeptide (Lys-Gly) (interchain with G-Cter in SUMO2); alternate linkage. T97 carries the phosphothreonine modification. 2 laminin-binding regions span residues I161–R180 and R205–G229. 5 [DE]-W-[ST] repeats span residues E230 to T232, D247 to S249, D266 to S268, D275 to S277, and E293 to S295. Residues Q242 to S295 are laminin-binding. The segment at D266 to S295 is disordered.

This sequence belongs to the universal ribosomal protein uS2 family. As to quaternary structure, monomer (37LRP) and homodimer (67LR). Component of the small ribosomal subunit. Mature ribosomes consist of a small (40S) and a large (60S) subunit. The 40S subunit contains about 33 different proteins and 1 molecule of RNA (18S). The 60S subunit contains about 49 different proteins and 3 molecules of RNA (28S, 5.8S and 5S). Interacts with RPS21. Interacts with several laminins including at least LAMB1. Interacts with MDK. The mature dimeric form interacts with PPP1R16B (via its fourth ankyrin repeat). Interacts with PPP1CA only in the presence of PPP1R16B. Post-translationally, acylated. Acylation may be a prerequisite for conversion of the monomeric 37 kDa laminin receptor precursor (37LRP) to the mature dimeric 67 kDa laminin receptor (67LR), and may provide a mechanism for membrane association. Cleaved by stromelysin-3 (ST3) at the cell surface. Cleavage by stromelysin-3 may be a mechanism to alter cell-extracellular matrix interactions.

Its subcellular location is the cell membrane. The protein resides in the cytoplasm. It is found in the nucleus. Functionally, required for the assembly and/or stability of the 40S ribosomal subunit. Required for the processing of the 20S rRNA-precursor to mature 18S rRNA in a late step of the maturation of 40S ribosomal subunits. Also functions as a cell surface receptor for laminin. Plays a role in cell adhesion to the basement membrane and in the consequent activation of signaling transduction pathways. May play a role in cell fate determination and tissue morphogenesis. Also acts as a receptor for several other ligands, including the pathogenic prion protein, viruses, and bacteria. Acts as a PPP1R16B-dependent substrate of PPP1CA. This chain is Small ribosomal subunit protein uS2, found in Bos taurus (Bovine).